The following is a 1059-amino-acid chain: Nonsense-mediated mRNA decay factor SMG7 (1059 aa).

2 TPR repeats span residues 149-183 (DQQS…LGDL) and 184-217 (ARYK…WPAS). Over residues 806-817 (SHVSPAHSQSTS) the composition is skewed to polar residues. Disordered stretches follow at residues 806-826 (SHVS…KWSP), 927-955 (HLGP…SGNN), 987-1015 (SGKP…QVPT), and 1040-1059 (STQL…RHFV).

As to quaternary structure, interacts with EXA1. In terms of tissue distribution, expressed in flowers and at lower levels in stems and leaves.

It is found in the cytoplasm. It localises to the P-body. Plays multiple roles in growth and development. Involved in nonsense-mediated mRNA decay (NMD). May provide a link to the mRNA degradation machinery to initiate NMD and serve as an adapter for UPF proteins function. Required for meiotic progression through anaphase II of pollen mother cells. May counteract cyclin-dependent kinase (CDK) activity at the end of meiosis. May play a role in plant defense through its involvement in NMD. Together with EXA1, helps to restrict cell death induction during pathogen infection in a salicylic acid- (SA) and reactive oxygen species- (ROS) independent manner. The chain is Nonsense-mediated mRNA decay factor SMG7 from Arabidopsis thaliana (Mouse-ear cress).